The chain runs to 260 residues: 33 kDa inner dynein arm light chain, axonemal (260 aa).

Residues 1–66 (MIPPNASLVK…PVESQKAQQT (66 aa)) are disordered. Residues 177-260 (MRKALQAEQG…LEGIIAPNKK (84 aa)) adopt a coiled-coil conformation.

It belongs to the inner dynein arm light chain family. May undergo some post-translational modifications that shift its mobility on SDS gels.

May play a dynamic role in flagellar motility. This chain is 33 kDa inner dynein arm light chain, axonemal, found in Strongylocentrotus purpuratus (Purple sea urchin).